Here is a 241-residue protein sequence, read N- to C-terminus: MQPQYQMGYDRAITVFSPDGRLYQVEYAREAVKRGTTAVGIKCNDGIVLLVDKRVNSKLLEPSSIEKIFKIDNHIGVASSGLVGDARSLVDRARVESQVNRVSYDEQIDVEMLSKKLCDHMQTYTQFGGARPYGTALLIAGISDGQFRLFETDPSGTLLEYKATGIGIGRNAVMKVFEEEYNPEASIRDAILLGLKALHAATEGKFDVNTVEIGVVNNDTPAFRKMSRQEVASFVEQIEQS.

The protein belongs to the peptidase T1A family. In terms of assembly, the 20S proteasome core is composed of 14 alpha and 14 beta subunits that assemble into four stacked heptameric rings, resulting in a barrel-shaped structure. The two inner rings, each composed of seven catalytic beta subunits, are sandwiched by two outer rings, each composed of seven alpha subunits. The catalytic chamber with the active sites is on the inside of the barrel. Has a gated structure, the ends of the cylinder being occluded by the N-termini of the alpha-subunits. Is capped at one or both ends by the proteasome regulatory ATPase, PAN.

The protein localises to the cytoplasm. The formation of the proteasomal ATPase PAN-20S proteasome complex, via the docking of the C-termini of PAN into the intersubunit pockets in the alpha-rings, triggers opening of the gate for substrate entry. Interconversion between the open-gate and close-gate conformations leads to a dynamic regulation of the 20S proteasome proteolysis activity. Component of the proteasome core, a large protease complex with broad specificity involved in protein degradation. In Methanosphaerula palustris (strain ATCC BAA-1556 / DSM 19958 / E1-9c), this protein is Proteasome subunit alpha.